Reading from the N-terminus, the 254-residue chain is Triosephosphate isomerase (254 aa).

12 to 14 provides a ligand contact to substrate; sequence NWK. Residue His-99 is the Electrophile of the active site. The active-site Proton acceptor is the Glu-169. Substrate contacts are provided by residues Gly-175, Ser-214, and 235 to 236; that span reads GG.

It belongs to the triosephosphate isomerase family. Homodimer.

Its subcellular location is the cytoplasm. The catalysed reaction is D-glyceraldehyde 3-phosphate = dihydroxyacetone phosphate. The protein operates within carbohydrate biosynthesis; gluconeogenesis. Its pathway is carbohydrate degradation; glycolysis; D-glyceraldehyde 3-phosphate from glycerone phosphate: step 1/1. Its function is as follows. Involved in the gluconeogenesis. Catalyzes stereospecifically the conversion of dihydroxyacetone phosphate (DHAP) to D-glyceraldehyde-3-phosphate (G3P). In Bartonella tribocorum (strain CIP 105476 / IBS 506), this protein is Triosephosphate isomerase.